The primary structure comprises 452 residues: MDHAELTTEQVLKRDIPWESYMANKLISGTCLQLLRRYDHKPESQRGPLLDEDGPSYVRVFLNILRNISKEDTVEYVLALIDEMLAVNPKRAALFYDNSLSGEDIYDPFLRLLLKGNWFVQEKSCKILTQIISARPKMQNGIVPNGEASNSKSKLTSTQDVLRGLVDWLCSQLRNPTHPNCSVPTAMHCLATLLREQYVRALFVQADGVKLLIPLISPASTQQSIQLLYETCLCIWLLSFYDAAVDYLSTTRVMPRLVEVVKGSTKEKVVRVVIMSIRNLLAKGAFAAQMIDLGLPHIVQNLKAQAWTDEDLLDALNQLEIGLKDNLKKLSSFEKYKQQVLLGHLDWSPMHKDPSFWRENINNFEENDFQILRVLMTIIDTSADTTALAVACYDLSQFLQYHPSGRIVVADLKAKDRVMKLMNHENAEVRKNALLCVQRLFLGAKYASFLQT.

Belongs to the V-ATPase H subunit family. V-ATPase is a heteromultimeric enzyme composed of a peripheral catalytic V1 complex (components A to H) attached to an integral membrane V0 proton pore complex (components: a, c, c', c'' and d).

Functionally, subunit of the peripheral V1 complex of vacuolar ATPase. Subunit H activates the ATPase activity of the enzyme and couples ATPase activity to proton flow. Vacuolar ATPase is responsible for acidifying a variety of intracellular compartments in eukaryotic cells, thus providing most of the energy required for transport processes in the vacuolar system. In Oryza sativa subsp. japonica (Rice), this protein is Probable V-type proton ATPase subunit H.